The sequence spans 218 residues: Small ribosomal subunit protein uS3c (218 aa).

In terms of domain architecture, KH type-2 spans 47–118 (VYKNIRNSSN…KLRMTLTEVT (72 aa)).

It belongs to the universal ribosomal protein uS3 family. Part of the 30S ribosomal subunit.

It localises to the plastid. The protein localises to the chloroplast. This is Small ribosomal subunit protein uS3c (rps3) from Physcomitrium patens (Spreading-leaved earth moss).